Consider the following 511-residue polypeptide: Cobyric acid synthase (511 aa).

The GATase cobBQ-type domain maps to 251–443 (LLDIAIICLP…IHGIFDNDIF (193 aa)). The active-site Nucleophile is the cysteine 332. Histidine 435 is an active-site residue.

The protein belongs to the CobB/CobQ family. CobQ subfamily.

It functions in the pathway cofactor biosynthesis; adenosylcobalamin biosynthesis. Catalyzes amidations at positions B, D, E, and G on adenosylcobyrinic A,C-diamide. NH(2) groups are provided by glutamine, and one molecule of ATP is hydrogenolyzed for each amidation. In Listeria welshimeri serovar 6b (strain ATCC 35897 / DSM 20650 / CCUG 15529 / CIP 8149 / NCTC 11857 / SLCC 5334 / V8), this protein is Cobyric acid synthase.